The following is a 235-amino-acid chain: Octanoyltransferase (235 aa).

The BPL/LPL catalytic domain maps to Asn30–Phe214. Substrate contacts are provided by residues Arg75–His82, Ala144–Gly146, and Gly157–Ala159. Catalysis depends on Cys175, which acts as the Acyl-thioester intermediate.

The protein belongs to the LipB family.

The protein resides in the cytoplasm. It carries out the reaction octanoyl-[ACP] + L-lysyl-[protein] = N(6)-octanoyl-L-lysyl-[protein] + holo-[ACP] + H(+). It functions in the pathway protein modification; protein lipoylation via endogenous pathway; protein N(6)-(lipoyl)lysine from octanoyl-[acyl-carrier-protein]: step 1/2. Catalyzes the transfer of endogenously produced octanoic acid from octanoyl-acyl-carrier-protein onto the lipoyl domains of lipoate-dependent enzymes. Lipoyl-ACP can also act as a substrate although octanoyl-ACP is likely to be the physiological substrate. The sequence is that of Octanoyltransferase from Caldicellulosiruptor saccharolyticus (strain ATCC 43494 / DSM 8903 / Tp8T 6331).